We begin with the raw amino-acid sequence, 673 residues long: UvrABC system protein B (673 aa).

Residues 24–182 enclose the Helicase ATP-binding domain; it reads EGVERNDPAQ…YSFVEILYNR (159 aa). Position 37–44 (37–44) interacts with ATP; it reads GVTGSGKT. The Beta-hairpin motif lies at 90-113; that stretch reads YYDYYQPEAFMPTSGLYIEKDLAI. One can recognise a Helicase C-terminal domain in the interval 429–591; that stretch reads QIDDLLDEIQ…ITPITVNKSK (163 aa). In terms of domain architecture, UVR spans 634 to 669; it reads TKMIDRAKKDMDKAAKDLDFVEAARYRDEMFALQKI.

Belongs to the UvrB family. As to quaternary structure, forms a heterotetramer with UvrA during the search for lesions. Interacts with UvrC in an incision complex.

It localises to the cytoplasm. The UvrABC repair system catalyzes the recognition and processing of DNA lesions. A damage recognition complex composed of 2 UvrA and 2 UvrB subunits scans DNA for abnormalities. Upon binding of the UvrA(2)B(2) complex to a putative damaged site, the DNA wraps around one UvrB monomer. DNA wrap is dependent on ATP binding by UvrB and probably causes local melting of the DNA helix, facilitating insertion of UvrB beta-hairpin between the DNA strands. Then UvrB probes one DNA strand for the presence of a lesion. If a lesion is found the UvrA subunits dissociate and the UvrB-DNA preincision complex is formed. This complex is subsequently bound by UvrC and the second UvrB is released. If no lesion is found, the DNA wraps around the other UvrB subunit that will check the other stand for damage. In Cytophaga hutchinsonii (strain ATCC 33406 / DSM 1761 / CIP 103989 / NBRC 15051 / NCIMB 9469 / D465), this protein is UvrABC system protein B.